Reading from the N-terminus, the 674-residue chain is Pentatricopeptide repeat-containing protein At4g17616 (674 aa).

PPR repeat units lie at residues 409–443, 444–478, 519–553, 554–584, and 593–627; these read GSRL…GYPM, ELAT…GLIT, MLYE…KIPP, TVQS…IKRN, and TQDL…DMYN.

It belongs to the PPR family. P subfamily.

The chain is Pentatricopeptide repeat-containing protein At4g17616 from Arabidopsis thaliana (Mouse-ear cress).